A 584-amino-acid polypeptide reads, in one-letter code: Endogenous retrovirus group FC1 Env polyprotein (584 aa).

The signal sequence occupies residues 1–22 (MARPSPLCLLLLLTLLTPIVPS). Residues 23-518 (NSLLTEPPFR…GWWQSPLTTW (496 aa)) are Extracellular-facing. Asparagine 69 and asparagine 247 each carry an N-linked (GlcNAc...) asparagine glycan. The CXXC signature appears at 251 to 254 (CFLC). 8 N-linked (GlcNAc...) asparagine glycosylation sites follow: asparagine 272, asparagine 276, asparagine 308, asparagine 313, asparagine 322, asparagine 334, asparagine 342, and asparagine 346. The fusion peptide stretch occupies residues 384–404 (AVFPPLVIGVSLTSSLVASGL). The CKS-17 motif lies at 449–465 (MQNRRALDLLTADKGGT). An intrachain disulfide couples cysteine 466 to cysteine 473. A CX6CC motif is present at residues 466–474 (CMFLGEECC). A glycan (N-linked (GlcNAc...) asparagine) is linked at asparagine 478. Residues 519–539 (IIPFISPILIICLLLLIAPCV) traverse the membrane as a helical segment. Residues 540-584 (LKFIKNRISEVSRVTVNQMLLHPYSRLPTSEDHYDDALTQQEAAR) are Cytoplasmic-facing.

This sequence belongs to the gamma type-C retroviral envelope protein family. HERV class-I F(c)1 env subfamily. As to quaternary structure, the surface (SU) and transmembrane (TM) proteins form a heterodimer. SU and TM are attached by noncovalent interactions or by a labile interchain disulfide bond. Specific enzymatic cleavages in vivo yield the mature SU and TM proteins. Post-translationally, the CXXC motif is highly conserved across a broad range of retroviral envelope proteins. It is thought to participate in the formation of a labile disulfide bond possibly with the CX6CC motif present in the transmembrane protein. As to expression, low expression in skin, testis and trachea.

It is found in the virion. It localises to the cell membrane. In terms of biological role, retroviral envelope proteins mediate receptor recognition and membrane fusion during early infection. Endogenous envelope proteins may have kept, lost or modified their original function during evolution. This endogenous envelope protein has lost its original fusogenic properties. Its function is as follows. SU mediates receptor recognition. TM anchors the envelope heterodimer to the viral membrane through one transmembrane domain. The other hydrophobic domain, called fusion peptide, mediates fusion of the viral membrane with the target cell membrane. This Homo sapiens (Human) protein is Endogenous retrovirus group FC1 Env polyprotein (ERVFC1).